The primary structure comprises 843 residues: OTU domain-containing protein 7B (843 aa).

The disordered stretch occupies residues 50–88; that stretch reads GNLPPSFSEGSGGSRTPEKGFSDREPTRPPRPILQRQDD. Residues 65–77 are compositionally biased toward basic and acidic residues; sequence TPEKGFSDREPTR. Residue Ser100 is modified to Phosphoserine. Residues 152–401 are TRAF-binding; that stretch reads ERDLIEQSML…AVDPGKGWEW (250 aa). The interval 167–440 is catalytic; sequence AGRLNWWVSV…VKWIPLSSDA (274 aa). The region spanning 183–365 is the OTU domain; that stretch reads LLPLATTGDG…QAHFSALVSM (183 aa). Residues 187–193 are regulatory loop; the sequence is ATTGDGN. Asp191 is a catalytic residue. The active-site Nucleophile is the Cys194. Catalysis depends on His358, which acts as the Proton acceptor. Disordered stretches follow at residues 442-587 and 652-711; these read APLA…GGSK and IMNG…CQEP. 2 stretches are compositionally biased toward basic and acidic residues: residues 456–471 and 488–500; these read DEPR…DKES and SKRD…KRAD. Ser464, Ser467, and Ser471 each carry phosphoserine. Residues 483-498 carry the Nuclear localization signal motif; the sequence is RRKEKSKRDREKDKKR. Residues 531–543 show a composition bias toward gly residues; that stretch reads KPGGVGTGLGGSS. Positions 665-675 are enriched in basic and acidic residues; the sequence is KKPEPDAREEQ. Thr729 carries the phosphothreonine modification. Residues 732–792 form a disordered region; the sequence is RQCPPGRPYP…PEPDGWAGGL (61 aa). The segment at 796–831 adopts an A20-type zinc-finger fold; sequence PPTQTKCKQPNCSFYGHPETNNFCSCCYREELRRRE. Zn(2+)-binding residues include Cys802, Cys807, Cys819, and Cys822.

Belongs to the peptidase C64 family. Interacts with ZAP70 in activated T cells, but not in resting T cells. Interacts with TRAF3. Interacts with TRAF6. Interacts with PARK7, leading to inhibit deubiquitinase activity. Interacts with EGFR, ITCH and NEDD4. Phosphorylated by EGFR. As to expression, widely expressed. Abundant in kidney, heart and fetal liver. Expressed differentially among B-cells at distinct developmental stages. Higher expression seen in primary immature B-cells as compared to the mature cells.

It localises to the cytoplasm. Its subcellular location is the nucleus. It catalyses the reaction Thiol-dependent hydrolysis of ester, thioester, amide, peptide and isopeptide bonds formed by the C-terminal Gly of ubiquitin (a 76-residue protein attached to proteins as an intracellular targeting signal).. Its activity is regulated as follows. Deubiquitinase activity is inhibited following interaction with PARK7. In terms of biological role, negative regulator of the non-canonical NF-kappa-B pathway that acts by mediating deubiquitination of TRAF3, an inhibitor of the NF-kappa-B pathway, thereby acting as a negative regulator of B-cell responses. In response to non-canonical NF-kappa-B stimuli, deubiquitinates 'Lys-48'-linked polyubiquitin chains of TRAF3, preventing TRAF3 proteolysis and over-activation of non-canonical NF-kappa-B. Negatively regulates mucosal immunity against infections. Deubiquitinates ZAP70, and thereby regulates T cell receptor (TCR) signaling that leads to the activation of NF-kappa-B. Plays a role in T cell homeostasis and is required for normal T cell responses, including production of IFNG and IL2. Mediates deubiquitination of EGFR. Has deubiquitinating activity toward 'Lys-11', 'Lys-48' and 'Lys-63'-linked polyubiquitin chains. Has a much higher catalytic rate with 'Lys-11'-linked polyubiquitin chains (in vitro); however the physiological significance of these data are unsure. Hydrolyzes both linear and branched forms of polyubiquitin. Acts as a regulator of mTORC1 and mTORC2 assembly by mediating 'Lys-63'-linked deubiquitination of MLST8, thereby promoting assembly of the mTORC2 complex, while inibiting formation of the mTORC1 complex. This chain is OTU domain-containing protein 7B (OTUD7B), found in Homo sapiens (Human).